The chain runs to 243 residues: Adenosylcobinamide-GDP ribazoletransferase (243 aa).

5 helical membrane-spanning segments follow: residues Leu-31 to Leu-51, Leu-57 to Leu-77, Ile-109 to Ile-129, Ile-135 to Thr-155, and Val-188 to Trp-208.

It belongs to the CobS family. Mg(2+) is required as a cofactor.

It localises to the cell inner membrane. It catalyses the reaction alpha-ribazole + adenosylcob(III)inamide-GDP = adenosylcob(III)alamin + GMP + H(+). It carries out the reaction alpha-ribazole 5'-phosphate + adenosylcob(III)inamide-GDP = adenosylcob(III)alamin 5'-phosphate + GMP + H(+). It participates in cofactor biosynthesis; adenosylcobalamin biosynthesis; adenosylcobalamin from cob(II)yrinate a,c-diamide: step 7/7. Functionally, joins adenosylcobinamide-GDP and alpha-ribazole to generate adenosylcobalamin (Ado-cobalamin). Also synthesizes adenosylcobalamin 5'-phosphate from adenosylcobinamide-GDP and alpha-ribazole 5'-phosphate. The chain is Adenosylcobinamide-GDP ribazoletransferase from Pseudomonas savastanoi pv. phaseolicola (strain 1448A / Race 6) (Pseudomonas syringae pv. phaseolicola (strain 1448A / Race 6)).